Reading from the N-terminus, the 183-residue chain is Large ribosomal subunit protein uL6 (183 aa).

This sequence belongs to the universal ribosomal protein uL6 family. As to quaternary structure, part of the 50S ribosomal subunit.

Functionally, this protein binds to the 23S rRNA, and is important in its secondary structure. It is located near the subunit interface in the base of the L7/L12 stalk, and near the tRNA binding site of the peptidyltransferase center. The protein is Large ribosomal subunit protein uL6 of Ruminiclostridium cellulolyticum (strain ATCC 35319 / DSM 5812 / JCM 6584 / H10) (Clostridium cellulolyticum).